Reading from the N-terminus, the 91-residue chain is Large ribosomal subunit protein uL23c (91 aa).

This sequence belongs to the universal ribosomal protein uL23 family. As to quaternary structure, part of the 50S ribosomal subunit.

The protein resides in the plastid. It localises to the chloroplast. In terms of biological role, binds to 23S rRNA. In Physcomitrium patens (Spreading-leaved earth moss), this protein is Large ribosomal subunit protein uL23c (rpl23).